A 628-amino-acid polypeptide reads, in one-letter code: uncharacterized protein (628 aa).

The protein belongs to the IucA/IucC family.

This is an uncharacterized protein from Sinorhizobium fredii (strain NBRC 101917 / NGR234).